A 1282-amino-acid polypeptide reads, in one-letter code: Ribosome biogenesis protein BMS1 homolog (1282 aa).

The span at methionine 1–arginine 24 shows a compositional bias: basic residues. The segment at methionine 1–lysine 43 is disordered. A Glycyl lysine isopeptide (Lys-Gly) (interchain with G-Cter in SUMO2) cross-link involves residue lysine 43. A Bms1-type G domain is found at proline 80 to arginine 245. Residues glycine 89–serine 96 form a G1 region. Glycine 89–serine 96 contributes to the ATP binding site. Residues proline 117 to valine 121 form a G2 region. Residues glutamate 132–cysteine 135 form a G3 region. The interval threonine 184–aspartate 187 is G4. Serine 188 is modified (phosphoserine). A G5 region spans residues leucine 219–glutamine 228. 2 disordered regions span residues aspartate 397 to glutamine 557 and proline 575 to tryptophan 667. Glycyl lysine isopeptide (Lys-Gly) (interchain with G-Cter in SUMO2) cross-links involve residues lysine 399 and lysine 415. Composition is skewed to acidic residues over residues glycine 434–glutamate 472 and aspartate 503–threonine 531. Residues lysine 535–glycine 550 show a composition bias toward low complexity. Serine 552 carries the phosphoserine modification. Positions phenylalanine 588–glutamate 610 are enriched in acidic residues. Residues serine 625 and serine 639 each carry the phosphoserine modification. Lysine 646 participates in a covalent cross-link: Glycyl lysine isopeptide (Lys-Gly) (interchain with G-Cter in SUMO2). Residues glutamate 653–tryptophan 667 show a composition bias toward basic and acidic residues. Threonine 708 is modified (phosphothreonine). Disordered regions lie at residues glutamate 787–lysine 822 and asparagine 1178–proline 1202. Lysine 810 is covalently cross-linked (Glycyl lysine isopeptide (Lys-Gly) (interchain with G-Cter in SUMO1); alternate). Lysine 810 participates in a covalent cross-link: Glycyl lysine isopeptide (Lys-Gly) (interchain with G-Cter in SUMO2); alternate. Lysine 1206 participates in a covalent cross-link: Glycyl lysine isopeptide (Lys-Gly) (interchain with G-Cter in SUMO2). The interval serine 1219–glutamine 1282 is disordered. Over residues glutamine 1228–leucine 1248 the composition is skewed to basic and acidic residues. Residues lysine 1249–phenylalanine 1259 show a composition bias toward basic residues.

It belongs to the TRAFAC class translation factor GTPase superfamily. Bms1-like GTPase family. BMS1 subfamily. In terms of assembly, part of the small subunit (SSU) processome, composed of more than 70 proteins and the RNA chaperone small nucleolar RNA (snoRNA) U3. Interacts with RCL1.

It localises to the nucleus. The protein localises to the nucleolus. It catalyses the reaction GTP + H2O = GDP + phosphate + H(+). In terms of biological role, GTPase required for the synthesis of 40S ribosomal subunits and for processing of pre-ribosomal RNA (pre-rRNA) at sites A0, A1, and A2. Controls access of pre-rRNA intermediates to RCL1 during ribosome biogenesis by binding RCL1 in a GTP-dependent manner, and delivering it to pre-ribosomes. GTP-binding and/or GTP hydrolysis may induce conformational rearrangements within the BMS1-RCL1 complex allowing the interaction of RCL1 with its RNA substrate. Required for RCL1 import into the nucleus. The chain is Ribosome biogenesis protein BMS1 homolog from Homo sapiens (Human).